Reading from the N-terminus, the 266-residue chain is Bidirectional sugar transporter SWEET7b (266 aa).

Residues methionine 1 to asparagine 9 lie on the Extracellular side of the membrane. Residues methionine 10–phenylalanine 30 form a helical membrane-spanning segment. Positions methionine 10–lysine 97 constitute a MtN3/slv 1 domain. Residues tyrosine 31–aspartate 45 are Cytoplasmic-facing. Residues proline 46 to histidine 66 form a helical membrane-spanning segment. At proline 67–serine 69 the chain is on the extracellular side. Residues isoleucine 70 to phenylalanine 90 form a helical membrane-spanning segment. Residues phenylalanine 91 to lysine 101 lie on the Cytoplasmic side of the membrane. The chain crosses the membrane as a helical span at residues methionine 102 to leucine 122. At glycine 123–serine 131 the chain is on the extracellular side. A helical membrane pass occupies residues leucine 132–isoleucine 152. The MtN3/slv 2 domain occupies isoleucine 133–threonine 216. At methionine 153–methionine 165 the chain is on the cytoplasmic side. Residues proline 166–isoleucine 186 traverse the membrane as a helical segment. Residues arginine 187–aspartate 189 lie on the Extracellular side of the membrane. A helical transmembrane segment spans residues isoleucine 190–tyrosine 210. Topologically, residues alanine 211–proline 266 are cytoplasmic.

This sequence belongs to the SWEET sugar transporter family. In terms of assembly, forms homooligomers and/or heterooligomers.

Its subcellular location is the cell membrane. In terms of biological role, mediates both low-affinity uptake and efflux of sugar across the plasma membrane. This Oryza sativa subsp. indica (Rice) protein is Bidirectional sugar transporter SWEET7b (SWEET7B).